A 420-amino-acid polypeptide reads, in one-letter code: Serine--tRNA ligase (420 aa).

An L-serine-binding site is contributed by Thr229–Glu231. Arg260–Glu262 is an ATP binding site. Glu283 contributes to the L-serine binding site. Glu347–Ser350 serves as a coordination point for ATP. Ser381 lines the L-serine pocket.

It belongs to the class-II aminoacyl-tRNA synthetase family. Type-1 seryl-tRNA synthetase subfamily. Homodimer. The tRNA molecule binds across the dimer.

The protein localises to the cytoplasm. It carries out the reaction tRNA(Ser) + L-serine + ATP = L-seryl-tRNA(Ser) + AMP + diphosphate + H(+). The enzyme catalyses tRNA(Sec) + L-serine + ATP = L-seryl-tRNA(Sec) + AMP + diphosphate + H(+). It functions in the pathway aminoacyl-tRNA biosynthesis; selenocysteinyl-tRNA(Sec) biosynthesis; L-seryl-tRNA(Sec) from L-serine and tRNA(Sec): step 1/1. In terms of biological role, catalyzes the attachment of serine to tRNA(Ser). Is also able to aminoacylate tRNA(Sec) with serine, to form the misacylated tRNA L-seryl-tRNA(Sec), which will be further converted into selenocysteinyl-tRNA(Sec). The protein is Serine--tRNA ligase of Gluconobacter oxydans (strain 621H) (Gluconobacter suboxydans).